We begin with the raw amino-acid sequence, 137 residues long: Basic phospholipase A2 beta-bungarotoxin A-AL4 chain (137 aa).

The signal sequence occupies residues 1 to 10 (LAVCVSLLGA). The propeptide occupies 11 to 18 (ANIPPQHL). 6 cysteine pairs are disulfide-bonded: Cys-45/Cys-137, Cys-47/Cys-63, Cys-62/Cys-118, Cys-69/Cys-111, Cys-79/Cys-104, and Cys-97/Cys-109. Residues Tyr-46, Gly-48, and Gly-50 each coordinate Ca(2+). The active site involves His-66. Asp-67 contributes to the Ca(2+) binding site. Asp-112 is a catalytic residue.

Belongs to the phospholipase A2 family. Group I subfamily. D49 sub-subfamily. In terms of assembly, heterodimer; disulfide-linked. The A chains have phospholipase A2 activity and the B chains show homology with the basic protease inhibitors. Requires Ca(2+) as cofactor. As to expression, expressed by the venom gland.

It is found in the secreted. The catalysed reaction is a 1,2-diacyl-sn-glycero-3-phosphocholine + H2O = a 1-acyl-sn-glycero-3-phosphocholine + a fatty acid + H(+). Functionally, snake venom phospholipase A2 (PLA2) that inhibits neuromuscular transmission by blocking acetylcholine release from the nerve termini. PLA2 catalyzes the calcium-dependent hydrolysis of the 2-acyl groups in 3-sn-phosphoglycerides. This chain is Basic phospholipase A2 beta-bungarotoxin A-AL4 chain, found in Bungarus multicinctus (Many-banded krait).